Reading from the N-terminus, the 111-residue chain is Probable 4-amino-4-deoxy-L-arabinose-phosphoundecaprenol flippase subunit ArnE (111 aa).

3 helical membrane passes run 38 to 58 (LWLGLALICMGAAMVLWLLVL), 61 to 81 (LPVGIAYPMLSLNFVWVTLAA), and 91 to 111 (PRHWLGVALIISGIIILGSAA). The EamA domain occupies 40–109 (LGLALICMGA…IISGIIILGS (70 aa)).

It belongs to the ArnE family. As to quaternary structure, heterodimer of ArnE and ArnF.

It is found in the cell inner membrane. The protein operates within bacterial outer membrane biogenesis; lipopolysaccharide biosynthesis. In terms of biological role, translocates 4-amino-4-deoxy-L-arabinose-phosphoundecaprenol (alpha-L-Ara4N-phosphoundecaprenol) from the cytoplasmic to the periplasmic side of the inner membrane. The polypeptide is Probable 4-amino-4-deoxy-L-arabinose-phosphoundecaprenol flippase subunit ArnE (Salmonella heidelberg (strain SL476)).